The primary structure comprises 132 residues: Large ribosomal subunit protein uL24 (132 aa).

Belongs to the universal ribosomal protein uL24 family. As to quaternary structure, part of the 50S ribosomal subunit.

One of two assembly initiator proteins, it binds directly to the 5'-end of the 23S rRNA, where it nucleates assembly of the 50S subunit. Functionally, one of the proteins that surrounds the polypeptide exit tunnel on the outside of the subunit. This Aquifex aeolicus (strain VF5) protein is Large ribosomal subunit protein uL24.